The sequence spans 423 residues: UPF0229 protein PSPPH_0628 (423 aa).

The segment at 65–110 (HHGRGGKQTVVHPGNKEFTTGEHIARPQGGGGGKGPGKAGNSGEGM) is disordered. Gly residues predominate over residues 92 to 107 (QGGGGGKGPGKAGNSG).

This sequence belongs to the UPF0229 family.

In Pseudomonas savastanoi pv. phaseolicola (strain 1448A / Race 6) (Pseudomonas syringae pv. phaseolicola (strain 1448A / Race 6)), this protein is UPF0229 protein PSPPH_0628.